The sequence spans 124 residues: Small ribosomal subunit protein uS12c (124 aa).

Disordered stretches follow at residues 1–28 (MPTIQQLVRSERRKIHKKTKSPALQSCP) and 104–124 (AAGVKDRRKSRSKYGTKKPKS). Basic residues-rich tracts occupy residues 11 to 20 (ERRKIHKKTK) and 109 to 124 (DRRKSRSKYGTKKPKS).

Belongs to the universal ribosomal protein uS12 family. In terms of assembly, part of the 30S ribosomal subunit.

The protein resides in the plastid. Its subcellular location is the chloroplast. With S4 and S5 plays an important role in translational accuracy. Located at the interface of the 30S and 50S subunits. The sequence is that of Small ribosomal subunit protein uS12c (rps12) from Pyropia yezoensis (Susabi-nori).